Consider the following 159-residue polypeptide: Type IV major alpha-pilin (159 aa).

The propeptide at M1 to G6 is leader sequence. Residue F7 is modified to N-methylphenylalanine. Residues F7 to L27 traverse the membrane as a helical segment. Residues V64 to P87 are disordered. A compositionally biased stretch (polar residues) spans E67–P87. A disulfide bond links C137 and C156.

The protein belongs to the N-Me-Phe pilin family. As to quaternary structure, major component of the type IV pilus (T4P) that plays a role in surface and attachment to the host epithelial tissues.

Its subcellular location is the fimbrium. The protein localises to the membrane. This chain is Type IV major alpha-pilin (tfpI), found in Moraxella bovis.